Consider the following 78-residue polypeptide: Small ribosomal subunit protein bS18 (78 aa).

This sequence belongs to the bacterial ribosomal protein bS18 family. Part of the 30S ribosomal subunit. Forms a tight heterodimer with protein bS6.

Its function is as follows. Binds as a heterodimer with protein bS6 to the central domain of the 16S rRNA, where it helps stabilize the platform of the 30S subunit. The chain is Small ribosomal subunit protein bS18 from Thermobifida fusca (strain YX).